A 677-amino-acid chain; its full sequence is uncharacterized protein (677 aa).

Residues 1–87 form a disordered region; the sequence is MGRHSKPDPE…PTGAEPIAAA (87 aa). Residues 17 to 29 are compositionally biased toward basic and acidic residues; that stretch reads SDGHAAEQQHWED. A compositionally biased stretch (low complexity) spans 51–64; the sequence is GHYSAVGGYSASGS. 4 consecutive transmembrane segments (helical) span residues 115 to 135, 192 to 212, 313 to 333, and 474 to 494; these read VSIGVIVALVAVVVMVAGVIL, VAVAVTSAGSDAVINGFIGKW, EAVAAASAPAGAPATAGIGAV, and ATLADTMVTASAGVAATIMLD.

Its subcellular location is the cell membrane. This is an uncharacterized protein from Mycobacterium tuberculosis (strain CDC 1551 / Oshkosh).